A 163-amino-acid chain; its full sequence is MENNKKLTLCEIPNAFIQFFNNKDYENKSKLFNNTETDQWWVSGDKNVYPFAGSDSIQKRLDGFQTLQNGYDKYSMTLIDQIIDHERRIMLVVGKTVSMGFGMTKEYSNEYAFIISVNEDGKICAIKEYFDPSAYLKMAQSTPSLQGIFKNFFPDSFAPTSRD.

Belongs to the UPF0523 family.

The chain is UPF0523 protein B from Dictyostelium discoideum (Social amoeba).